The following is a 300-amino-acid chain: Pantoate kinase (300 aa).

The protein belongs to the GHMP kinase family. PoK subfamily. As to quaternary structure, homodimer.

The enzyme catalyses (R)-pantoate + ATP = (R)-4-phosphopantoate + ADP + H(+). Its pathway is cofactor biosynthesis; coenzyme A biosynthesis. Its activity is regulated as follows. Moderately stimulated in the presence of potassium cations. Inhibited by increasing concentrations of pantoate. Activity is not affected by CoA/acetyl-CoA. In terms of biological role, phosphorylates (R)-pantoate to form (R)-4-phosphopantoate in the CoA biosynthesis pathway. Displays broad nucleotide specificity and utilizes ATP, GTP, UTP, and CTP with comparable catalytic efficiencies. This chain is Pantoate kinase, found in Thermococcus kodakarensis (strain ATCC BAA-918 / JCM 12380 / KOD1) (Pyrococcus kodakaraensis (strain KOD1)).